We begin with the raw amino-acid sequence, 204 residues long: Proteasome subunit beta type-3-B (204 aa).

The protein belongs to the peptidase T1B family. In terms of assembly, component of the 20S core complex of the 26S proteasome. The 26S proteasome is composed of a core protease (CP), known as the 20S proteasome, capped at one or both ends by the 19S regulatory particle (RP/PA700). The 20S proteasome core is composed of 28 subunits that are arranged in four stacked rings, resulting in a barrel-shaped structure. The two end rings are each formed by seven alpha subunits, and the two central rings are each formed by seven beta subunits. The catalytic chamber with the active sites is on the inside of the barrel.

The protein localises to the cytoplasm. Its subcellular location is the nucleus. Functionally, non-catalytic component of the proteasome, a multicatalytic proteinase complex which is characterized by its ability to cleave peptides with Arg, Phe, Tyr, Leu, and Glu adjacent to the leaving group at neutral or slightly basic pH. The proteasome has an ATP-dependent proteolytic activity. This chain is Proteasome subunit beta type-3-B (PBC2), found in Arabidopsis thaliana (Mouse-ear cress).